A 95-amino-acid polypeptide reads, in one-letter code: Aspartyl/glutamyl-tRNA(Asn/Gln) amidotransferase subunit C (95 aa).

This sequence belongs to the GatC family. Heterotrimer of A, B and C subunits.

It carries out the reaction L-glutamyl-tRNA(Gln) + L-glutamine + ATP + H2O = L-glutaminyl-tRNA(Gln) + L-glutamate + ADP + phosphate + H(+). The enzyme catalyses L-aspartyl-tRNA(Asn) + L-glutamine + ATP + H2O = L-asparaginyl-tRNA(Asn) + L-glutamate + ADP + phosphate + 2 H(+). Its function is as follows. Allows the formation of correctly charged Asn-tRNA(Asn) or Gln-tRNA(Gln) through the transamidation of misacylated Asp-tRNA(Asn) or Glu-tRNA(Gln) in organisms which lack either or both of asparaginyl-tRNA or glutaminyl-tRNA synthetases. The reaction takes place in the presence of glutamine and ATP through an activated phospho-Asp-tRNA(Asn) or phospho-Glu-tRNA(Gln). This Lysinibacillus sphaericus (strain C3-41) protein is Aspartyl/glutamyl-tRNA(Asn/Gln) amidotransferase subunit C.